A 344-amino-acid chain; its full sequence is Nuclear distribution protein nudE homolog 1 (344 aa).

The self-association stretch occupies residues 1–93 (MEDSGKTFGS…MQHSEGYRQI (93 aa)). Positions 18–188 (WRDLAMTYKQ…ELAVQQKQDK (171 aa)) form a coiled coil. Basic and acidic residues predominate over residues 30–47 (ENTQEELREFQEGSREYE). The tract at residues 30-65 (ENTQEELREFQEGSREYEAELETQLQQAETRNRDLL) is disordered. Residues 88–156 (EGYRQISALE…ERNAFLESEL (69 aa)) are interaction with PAFAH1B1. Positions 167-290 (QRLKDEARDL…QSPSRKSGPA (124 aa)) are interaction with CENPF. The interval 181 to 243 (AVQQKQDKPR…CGLGSPSSGT (63 aa)) is disordered. Polar residues predominate over residues 208–230 (ATGSAPSTPITHQGSSSGLNTPE). S211 is modified (phosphoserine). Residues T215, T228, T243, and T246 each carry the phosphothreonine modification. A lipid anchor (S-palmitoyl cysteine; by ZDHHC2, ZDHHC3 and ZDHHC7) is attached at C274. The tract at residues 279–337 (YDQSPSRKSGPALGRGTKNRDGIDRRPGSTAVGDKGSGKRLEFAKPSSQLSSPALPSTQ) is disordered. A Phosphoserine modification is found at S282. Residues 296-305 (KNRDGIDRRP) are compositionally biased toward basic and acidic residues. Residues 324 to 335 (PSSQLSSPALPS) show a composition bias toward low complexity.

It belongs to the nudE family. Homodimer. Interacts with CNTRL, LIS1, dynein, SLMAP and TCP1. Interacts with CENPF, dynactin, tubulin gamma, PAFAH1B1, PCM1 and PCNT. Interacts with ZNF365. Interacts with GTP-bound RAB9A and RAB9B; the interaction leads to RAB9-dynein motor tethering. Interacts (via C-terminus) with MCRS1 (via C-terminus); phosphorylation of NDE1 inhibits the interaction. Post-translationally, phosphorylated in mitosis. Phosphorylation at Thr-246 is essential for the G2/M transition. Expressed in brain, heart, kidney, liver, lung, skeletal muscle, spleen and testis.

The protein localises to the cytoplasm. Its subcellular location is the cytoskeleton. It localises to the microtubule organizing center. It is found in the centrosome. The protein resides in the spindle. The protein localises to the chromosome. Its subcellular location is the centromere. It localises to the kinetochore. It is found in the cleavage furrow. The protein resides in the cytoplasmic vesicle membrane. Its function is as follows. Required for centrosome duplication and formation and function of the mitotic spindle. Essential for the development of the cerebral cortex. May regulate the production of neurons by controlling the orientation of the mitotic spindle during division of cortical neuronal progenitors of the proliferative ventricular zone of the brain. Orientation of the division plane perpendicular to the layers of the cortex gives rise to two proliferative neuronal progenitors whereas parallel orientation of the division plane yields one proliferative neuronal progenitor and a postmitotic neuron. A premature shift towards a neuronal fate within the progenitor population may result in an overall reduction in the final number of neurons and an increase in the number of neurons in the deeper layers of the cortex. Acts as a RAB9A/B effector that tethers RAB9-associated late endosomes to the dynein motor for their retrograde transport to the trans-Golgi network. The protein is Nuclear distribution protein nudE homolog 1 of Rattus norvegicus (Rat).